The chain runs to 294 residues: 1D-myo-inositol 2-acetamido-2-deoxy-alpha-D-glucopyranoside deacetylase (294 aa).

His14, Asp17, and His149 together coordinate Zn(2+).

This sequence belongs to the MshB deacetylase family. The cofactor is Zn(2+).

The enzyme catalyses 1D-myo-inositol 2-acetamido-2-deoxy-alpha-D-glucopyranoside + H2O = 1D-myo-inositol 2-amino-2-deoxy-alpha-D-glucopyranoside + acetate. In terms of biological role, catalyzes the deacetylation of 1D-myo-inositol 2-acetamido-2-deoxy-alpha-D-glucopyranoside (GlcNAc-Ins) in the mycothiol biosynthesis pathway. This chain is 1D-myo-inositol 2-acetamido-2-deoxy-alpha-D-glucopyranoside deacetylase, found in Rhodococcus erythropolis (strain PR4 / NBRC 100887).